The chain runs to 101 residues: Urease subunit beta (101 aa).

It belongs to the urease beta subunit family. Heterotrimer of UreA (gamma), UreB (beta) and UreC (alpha) subunits. Three heterotrimers associate to form the active enzyme.

It is found in the cytoplasm. The catalysed reaction is urea + 2 H2O + H(+) = hydrogencarbonate + 2 NH4(+). The protein operates within nitrogen metabolism; urea degradation; CO(2) and NH(3) from urea (urease route): step 1/1. In Bradyrhizobium sp. (strain ORS 278), this protein is Urease subunit beta.